Here is a 483-residue protein sequence, read N- to C-terminus: Probable pectate lyase 12 (483 aa).

Positions 1–24 (MMLQRSCIVLFFSLFLLVPQMVFS) are cleaved as a signal peptide. Asparagine 27 and asparagine 50 each carry an N-linked (GlcNAc...) asparagine glycan. Ca(2+)-binding residues include aspartate 220, aspartate 244, and aspartate 248. Arginine 300 is an active-site residue.

This sequence belongs to the polysaccharide lyase 1 family. Ca(2+) is required as a cofactor.

It catalyses the reaction Eliminative cleavage of (1-&gt;4)-alpha-D-galacturonan to give oligosaccharides with 4-deoxy-alpha-D-galact-4-enuronosyl groups at their non-reducing ends.. The protein operates within glycan metabolism; pectin degradation; 2-dehydro-3-deoxy-D-gluconate from pectin: step 2/5. The chain is Probable pectate lyase 12 from Arabidopsis thaliana (Mouse-ear cress).